Here is a 552-residue protein sequence, read N- to C-terminus: MPLEKTNTHDSTATVEDQEATDNPMHLTQSRMLDLAGNPNRTTSRQSETLFPNGVDLNYPFTTTRGPPDVAEYNLETAEGVYRDPTINEGEEELVTWELNDPENPHNWSRLWKWYITIVNSLLVVCSAFGSSVIAGDLEDVSRDLKVGPEVANLSCSLMVVGFGIGPLVISPLSEMIGRRIVYLVTLMIYIVLQIPCALAPNIACLLIVRFFCGCFGCTPLTLAGGVISDVWETRERGLAIAFFAAGPYAGPTLGPLVGGWIGVGTGDFRWIFWVNMIYMFVMYLTLLPVPETYAPVLLRWRAQRIRKETGRQVFTAQEKQMLSFKEIVQVNLTRPLTLLLTEPILVCISGYIALIYALLYGYFFAYPNVFVKGKGYNEGITGLMFIPILVGVVGALSTTPFLEKQYMAKLDANNGKSVPEWRLVGMCIASPFIPTGLLIFAWTSFPRLIWIGPAFSGAPFGYGMVLFYFSANNYLIDVYQNYCASALAAKTMVRSAGGAAFPLFIDYMMDGMTRQWAFFLLGMVAVAAIPIPFTFYLFGDKIRARSKAAIV.

The tract at residues 1–59 (MPLEKTNTHDSTATVEDQEATDNPMHLTQSRMLDLAGNPNRTTSRQSETLFPNGVDLNY) is disordered. Polar residues predominate over residues 39 to 50 (PNRTTSRQSETL). 12 helical membrane-spanning segments follow: residues 116 to 136 (ITIV…VIAG), 158 to 178 (LMVV…EMIG), 181 to 201 (IVYL…ALAP), 203 to 223 (IACL…PLTL), 238 to 258 (GLAI…GPLV), 271 to 291 (WIFW…LPVP), 345 to 365 (ILVC…GYFF), 383 to 403 (GLMF…TPFL), 424 to 444 (LVGM…FAWT), 450 to 470 (IWIG…LFYF), 484 to 506 (CASA…PLFI), and 519 to 539 (FFLL…FYLF).

The protein belongs to the major facilitator superfamily.

The protein localises to the membrane. This is an uncharacterized protein from Schizosaccharomyces pombe (strain 972 / ATCC 24843) (Fission yeast).